Here is a 775-residue protein sequence, read N- to C-terminus: Polyribonucleotide nucleotidyltransferase (775 aa).

Mg(2+) contacts are provided by Asp487 and Asp493. In terms of domain architecture, KH spans 554–613 (PKVEVVDVPEEKAPLIIGPGGSTVKKIYDETGVKVWVGEQGKVYLFVFPGGDVEKAKQMI). S1 motif domains follow at residues 623–693 (GAVY…IGIE) and 707–775 (GDVY…TDDV).

It belongs to the polyribonucleotide nucleotidyltransferase family. Mg(2+) is required as a cofactor.

The protein localises to the cytoplasm. It carries out the reaction RNA(n+1) + phosphate = RNA(n) + a ribonucleoside 5'-diphosphate. Its function is as follows. Involved in mRNA degradation. Catalyzes the phosphorolysis of single-stranded polyribonucleotides processively in the 3'- to 5'-direction. This Aquifex aeolicus (strain VF5) protein is Polyribonucleotide nucleotidyltransferase.